A 272-amino-acid chain; its full sequence is MPQPRKRFAQHWLRSETALDQIIEAAQLNMSDLVLEIGPGTGILTRRLLPLVQSIVAVELDRDLCYRLAKSFGNFNHFLLLEGDILSLDLTTQLEQFPQFQPINKVVANIPYNITSPILEKLLGSIAHPQHPSYELIVLLMQKEVAQRIVASPQSKAYGALSVRTQYLAQCDYICEVPSKAFDPPPKVDSAVIRLTPRSLETPAINPQKLDQLVKLGFANRRKMLHNNLKSIIDKDHLTLLLDQLQINPQVRAEELSLEQWIMFSNLLETVS.

Residues His-11, Leu-13, Gly-38, Glu-59, Asp-84, and Asn-109 each contribute to the S-adenosyl-L-methionine site.

The protein belongs to the class I-like SAM-binding methyltransferase superfamily. rRNA adenine N(6)-methyltransferase family. RsmA subfamily.

It localises to the cytoplasm. It catalyses the reaction adenosine(1518)/adenosine(1519) in 16S rRNA + 4 S-adenosyl-L-methionine = N(6)-dimethyladenosine(1518)/N(6)-dimethyladenosine(1519) in 16S rRNA + 4 S-adenosyl-L-homocysteine + 4 H(+). In terms of biological role, specifically dimethylates two adjacent adenosines (A1518 and A1519) in the loop of a conserved hairpin near the 3'-end of 16S rRNA in the 30S particle. May play a critical role in biogenesis of 30S subunits. The chain is Ribosomal RNA small subunit methyltransferase A from Rippkaea orientalis (strain PCC 8801 / RF-1) (Cyanothece sp. (strain PCC 8801)).